The chain runs to 149 residues: Transcriptional repressor NrdR (149 aa).

A zinc finger lies at 3-34 (CPFCSATDTKVIDSRLVAEGHQVRRRRECTEC). Positions 49–139 (PRVIKRDGSR…VYRAFEDVSE (91 aa)) constitute an ATP-cone domain.

This sequence belongs to the NrdR family. The cofactor is Zn(2+).

In terms of biological role, negatively regulates transcription of bacterial ribonucleotide reductase nrd genes and operons by binding to NrdR-boxes. The chain is Transcriptional repressor NrdR from Shewanella baltica (strain OS223).